A 98-amino-acid polypeptide reads, in one-letter code: NADH-ubiquinone oxidoreductase chain 4L (98 aa).

A run of 3 helical transmembrane segments spans residues 1–21 (MTPV…GLAF), 29–49 (ALLC…LWAL), and 58–78 (VAPM…LALL).

This sequence belongs to the complex I subunit 4L family.

The protein resides in the mitochondrion membrane. The enzyme catalyses a ubiquinone + NADH + 5 H(+)(in) = a ubiquinol + NAD(+) + 4 H(+)(out). In terms of biological role, core subunit of the mitochondrial membrane respiratory chain NADH dehydrogenase (Complex I) which catalyzes electron transfer from NADH through the respiratory chain, using ubiquinone as an electron acceptor. Part of the enzyme membrane arm which is embedded in the lipid bilayer and involved in proton translocation. The sequence is that of NADH-ubiquinone oxidoreductase chain 4L (MT-ND4L) from Oncorhynchus clarkii (Cutthroat trout).